Here is a 240-residue protein sequence, read N- to C-terminus: Transcriptional regulatory protein ResD (240 aa).

Residues 8-121 (KILVVDDEAR…EVVLRVKALL (114 aa)) form the Response regulatory domain. The residue at position 57 (Asp57) is a 4-aspartylphosphate. The ompR/PhoB-type DNA-binding region spans 137–237 (KNVLVFSHLS…VWGVGYKFEV (101 aa)).

As to quaternary structure, interacts with the RNA polymerase core. In terms of processing, phosphorylated by ResE.

It is found in the cytoplasm. In terms of biological role, member of the two-component regulatory system ResD/ResE. Required for the expression of resA, ctaA, qcrABC and fnr; activation role in global regulation of aerobic and anaerobic respiration. This Bacillus subtilis (strain 168) protein is Transcriptional regulatory protein ResD (resD).